Here is a 198-residue protein sequence, read N- to C-terminus: Holliday junction branch migration complex subunit RuvA (198 aa).

The domain I stretch occupies residues 1–64; it reads MIAHLRGTLL…EDAIALFGFL (64 aa). Residues 65 to 141 are domain II; that stretch reads DREEKRLFER…LDDLIAAAPA (77 aa). The interval 141-145 is flexible linker; sequence AAGPV. The interval 146 to 198 is domain III; that stretch reads AAGPAAEDVLSALLNLGYQRPAALKAIETAVEKDAAAGEDFDLLFRAALKLIR.

The protein belongs to the RuvA family. In terms of assembly, homotetramer. Forms an RuvA(8)-RuvB(12)-Holliday junction (HJ) complex. HJ DNA is sandwiched between 2 RuvA tetramers; dsDNA enters through RuvA and exits via RuvB. An RuvB hexamer assembles on each DNA strand where it exits the tetramer. Each RuvB hexamer is contacted by two RuvA subunits (via domain III) on 2 adjacent RuvB subunits; this complex drives branch migration. In the full resolvosome a probable DNA-RuvA(4)-RuvB(12)-RuvC(2) complex forms which resolves the HJ.

The protein localises to the cytoplasm. Functionally, the RuvA-RuvB-RuvC complex processes Holliday junction (HJ) DNA during genetic recombination and DNA repair, while the RuvA-RuvB complex plays an important role in the rescue of blocked DNA replication forks via replication fork reversal (RFR). RuvA specifically binds to HJ cruciform DNA, conferring on it an open structure. The RuvB hexamer acts as an ATP-dependent pump, pulling dsDNA into and through the RuvAB complex. HJ branch migration allows RuvC to scan DNA until it finds its consensus sequence, where it cleaves and resolves the cruciform DNA. The polypeptide is Holliday junction branch migration complex subunit RuvA (Acidobacterium capsulatum (strain ATCC 51196 / DSM 11244 / BCRC 80197 / JCM 7670 / NBRC 15755 / NCIMB 13165 / 161)).